Here is a 447-residue protein sequence, read N- to C-terminus: Thiol-specific monooxygenase (447 aa).

FAD-binding positions include 13–17, glutamate 38, 46–47, 91–92, and 137–138; these read GAGPS, VW, NT, and DV. 90-91 is a binding site for NADP(+); it reads TN. Residue 223-226 coordinates NADP(+); sequence SAND.

This sequence belongs to the FMO family. Monomer. Requires FAD as cofactor.

In terms of biological role, flavin-dependent oxidation of thiol-containing compounds. Probably required for the correct folding of disulfide-bonded proteins. The polypeptide is Thiol-specific monooxygenase (fmo1) (Schizosaccharomyces pombe (strain 972 / ATCC 24843) (Fission yeast)).